Here is a 699-residue protein sequence, read N- to C-terminus: Chitin synthase 7 (699 aa).

A run of 6 helical transmembrane segments spans residues 19 to 39 (IVGV…AAFL), 58 to 80 (SVVV…VVTL), 98 to 118 (LQWF…LFCI), 445 to 465 (FMQN…LAII), 474 to 494 (LPVG…IYFG), and 507 to 527 (VMFV…IFTA). Residues 628–648 (AAGGSGEASEPGTRWAPDPRE) are disordered.

The protein belongs to the chitin synthase family. Class VI subfamily.

The protein localises to the cell membrane. The enzyme catalyses [(1-&gt;4)-N-acetyl-beta-D-glucosaminyl](n) + UDP-N-acetyl-alpha-D-glucosamine = [(1-&gt;4)-N-acetyl-beta-D-glucosaminyl](n+1) + UDP + H(+). In terms of biological role, polymerizes chitin, a structural polymer of the cell wall and septum, by transferring the sugar moiety of UDP-GlcNAc to the non-reducing end of the growing chitin polymer. Plays a role in cell wall integrity. Required to successfully penetrate the host plants and thus plays a key role in pathogenicity. The sequence is that of Chitin synthase 7 from Verticillium dahliae (strain VdLs.17 / ATCC MYA-4575 / FGSC 10137) (Verticillium wilt).